Here is a 136-residue protein sequence, read N- to C-terminus: Ribonuclease P protein component (136 aa).

It belongs to the RnpA family. As to quaternary structure, consists of a catalytic RNA component (M1 or rnpB) and a protein subunit.

The enzyme catalyses Endonucleolytic cleavage of RNA, removing 5'-extranucleotides from tRNA precursor.. In terms of biological role, RNaseP catalyzes the removal of the 5'-leader sequence from pre-tRNA to produce the mature 5'-terminus. It can also cleave other RNA substrates such as 4.5S RNA. The protein component plays an auxiliary but essential role in vivo by binding to the 5'-leader sequence and broadening the substrate specificity of the ribozyme. This chain is Ribonuclease P protein component, found in Burkholderia mallei (strain NCTC 10247).